The following is a 134-amino-acid chain: Small ribosomal subunit protein uS8c (134 aa).

Belongs to the universal ribosomal protein uS8 family. As to quaternary structure, part of the 30S ribosomal subunit.

The protein resides in the plastid. It is found in the chloroplast. In terms of biological role, one of the primary rRNA binding proteins, it binds directly to 16S rRNA central domain where it helps coordinate assembly of the platform of the 30S subunit. The polypeptide is Small ribosomal subunit protein uS8c (rps8) (Daucus carota (Wild carrot)).